The following is a 960-amino-acid chain: Dynamin-like GTPase OPA1, mitochondrial (960 aa).

The N-terminal 87 residues, 1–87 (MWRLRRAAVA…IKYGYQPRRN (87 aa)), are a transit peptide targeting the mitochondrion. Residues 88–96 (FWPARLATR) are Mitochondrial matrix-facing. Residues 97–113 (LLKLRYLILGSAVGGGY) traverse the membrane as a helical segment. Residues 114 to 770 (TAKKTFDQWK…NAIENMVGPD (657 aa)) are Mitochondrial intermembrane-facing. 2 consecutive short sequence motifs (LQQQIQ motif) follow at residues 181 to 186 (DFFTSG) and 217 to 222 (QLQEEL). The stretch at 210–254 (SDKEKIDQLQEELLHTQLKYQRILERLEKENKELRKLVLQKDDKG) forms a coiled coil. Lys228 is modified (N6-acetyllysine). Residues 235 to 240 (RLEKEN) carry the LQQQIQ motif motif. In terms of domain architecture, Dynamin-type G spans 285–561 (QDHLPRVVVV…FWKMVRESVE (277 aa)). The G1 motif stretch occupies residues 295-302 (GDQSAGKT). Residues Ser298, Gly300, Lys301, Thr302, Ser303, and Gly317 each contribute to the GTP site. Mg(2+) is bound at residue Thr302. A G2 motif region spans residues 321–324 (MMTR). Mg(2+) is bound by residues Thr323 and Asp398. The tract at residues 398–401 (DLPG) is G3 motif. The interval 467–470 (TKVD) is G4 motif. Residues Lys468, Asp470, Thr503, Gly506, and Asn507 each coordinate GTP. Residues 501 to 504 (VVTG) form a G5 motif region. 2 stalk region regions span residues 589-836 (DRNE…IKDT) and 874-928 (CNDV…IKLL). A paddle region region spans residues 736 to 856 (SDKQQWDAAI…KTALNHCNLC (121 aa)). The stretch at 771-781 (WKKRWLYWKNR) is an intramembrane region. Residues 782 to 960 (TQEQCVHNET…AFIEALHQEK (179 aa)) are Mitochondrial intermembrane-facing. A disulfide bridge links Cys856 with Cys874. Residues 895-960 (RQQLTNTEVR…AFIEALHQEK (66 aa)) are a coiled coil.

The protein belongs to the TRAFAC class dynamin-like GTPase superfamily. Dynamin/Fzo/YdjA family. Oligomeric complex consisting of membrane-bound and soluble forms of OPA1. Interacts with RCC1L; RCC1L acts as a guanine nucleotide exchange factor (GEF) for OPA1 by exchanging bound GDP for free GTP. Interacts with CHCHD3 and IMMT; these interactions occur preferentially with soluble OPA1 forms. Interacts with PRELID1. Post-translationally, cleaved by OMA1 or YME1L downstream of the transmembrane region in response to different signals to generate soluble forms. Cleaved by OMA1 at position S1 following stress conditions, generating the short soluble form (Dynamin-like GTPase OPA1, short form; S-OPA1). AFG3L2 is involved in the regulation of OMA1-dependent processing of OPA1. PARL-dependent proteolytic processing releases an antiapoptotic soluble form not required for mitochondrial fusion. In terms of processing, cleavage at position S2 by YME1L is required to mediate oxidative phosphorylation (OXPHOS)-induced mitochondrial fusion. Cleavage occurs in the sequence motif Leu-Gln-Gln-Gln-Ile-Gln (LQQQIQ). Cleavage at position S2 by YME1L is required to mediate oxidative phosphorylation (OXPHOS)-induced mitochondrial fusion. Cleavage occurs in the sequence motif Leu-Gln-Gln-Gln-Ile-Gln (LQQQIQ). Cleavage at position S3 by YME1L is required for membrane tubulation. Post-translationally, cleavage at position S3 by YME1L is required for membrane tubulation. In terms of tissue distribution, highly expressed in retina. Also expressed in brain, testis, heart and skeletal muscle. Low levels of all isoforms expressed in a variety of tissues. Expressed in retina, skeletal muscle, heart, lung, ovary, colon, thyroid gland, leukocytes and fetal brain. Low levels of all isoforms expressed in a variety of tissues. As to expression, isoform 2 expressed in colon, liver, kidney, thyroid gland and leukocytes.

Its subcellular location is the mitochondrion inner membrane. The protein resides in the mitochondrion intermembrane space. The catalysed reaction is GTP + H2O = GDP + phosphate + H(+). Activated by guanine nucleotide exchange factor RCC1L. In terms of biological role, dynamin-related GTPase that is essential for normal mitochondrial morphology by mediating fusion of the mitochondrial inner membranes, regulating cristae morphology and maintaining respiratory chain function. Exists in two forms: the transmembrane, long form (Dynamin-like GTPase OPA1, long form; L-OPA1), which is tethered to the inner mitochondrial membrane, and the short soluble form (Dynamin-like GTPase OPA1, short form; S-OPA1), which results from proteolytic cleavage and localizes in the intermembrane space. Both forms (L-OPA1 and S-OPA1) cooperate to catalyze the fusion of the mitochondrial inner membrane. The equilibrium between L-OPA1 and S-OPA1 is essential: excess levels of S-OPA1, produced by cleavage by OMA1 following loss of mitochondrial membrane potential, lead to an impaired equilibrium between L-OPA1 and S-OPA1, inhibiting mitochondrial fusion. The balance between L-OPA1 and S-OPA1 also influences cristae shape and morphology. Involved in remodeling cristae and the release of cytochrome c during apoptosis. Proteolytic processing by PARL in response to intrinsic apoptotic signals may lead to disassembly of OPA1 oligomers and release of the caspase activator cytochrome C (CYCS) into the mitochondrial intermembrane space. Acts as a regulator of T-helper Th17 cells, which are characterized by cells with fused mitochondria with tight cristae, by mediating mitochondrial membrane remodeling: OPA1 is required for interleukin-17 (IL-17) production. Its role in mitochondrial morphology is required for mitochondrial genome maintenance. Its function is as follows. Constitutes the transmembrane long form (L-OPA1) that plays a central role in mitochondrial inner membrane fusion and cristae morphology. L-OPA1 and the soluble short form (S-OPA1) form higher-order helical assemblies that coordinate the fusion of mitochondrial inner membranes. Inner membrane-anchored L-OPA1 molecules initiate membrane remodeling by recruiting soluble S-OPA1 to rapidly polymerize into a flexible cylindrical scaffold encaging the mitochondrial inner membrane. Once at the membrane surface, the formation of S-OPA1 helices induce bilayer curvature. OPA1 dimerization through the paddle region, which inserts into cardiolipin-containing membrane, promotes GTP hydrolysis and the helical assembly of a flexible OPA1 lattice on the membrane, which drives membrane curvature and mitochondrial fusion. Plays a role in the maintenance and remodeling of mitochondrial cristae, some invaginations of the mitochondrial inner membrane that provide an increase in the surface area. Probably acts by forming helical filaments at the inside of inner membrane tubes with the shape and dimensions of crista junctions. The equilibrium between L-OPA1 and S-OPA1 influences cristae shape and morphology: increased L-OPA1 levels promote cristae stacking and elongated mitochondria, while increased S-OPA1 levels correlated with irregular cristae packing and round mitochondria shape. Functionally, constitutes the soluble short form (S-OPA1) generated by cleavage by OMA1, which plays a central role in mitochondrial inner membrane fusion and cristae morphology. The transmembrane long form (L-OPA1) and the S-OPA1 form higher-order helical assemblies that coordinate the fusion of mitochondrial inner membranes. Inner membrane-anchored L-OPA1 molecules initiate membrane remodeling by recruiting soluble S-OPA1 to rapidly polymerize into a flexible cylindrical scaffold encaging the mitochondrial inner membrane. Once at the membrane surface, the formation of S-OPA1 helices induce bilayer curvature. OPA1 dimerization through the paddle region, which inserts into cardiolipin-containing membrane, promotes GTP hydrolysis and the helical assembly of a flexible OPA1 lattice on the membrane, which drives membrane curvature and mitochondrial fusion. Excess levels of S-OPA1 produced by cleavage by OMA1 following stress conditions that induce loss of mitochondrial membrane potential, lead to an impaired equilibrium between L-OPA1 and S-OPA1, thereby inhibiting mitochondrial fusion. Involved in mitochondrial safeguard in response to transient mitochondrial membrane depolarization by mediating flickering: cleavage by OMA1 leads to excess production of S-OPA1, preventing mitochondrial hyperfusion. Plays a role in the maintenance and remodeling of mitochondrial cristae, some invaginations of the mitochondrial inner membrane that provide an increase in the surface area. Probably acts by forming helical filaments at the inside of inner membrane tubes with the shape and dimensions of crista junctions. The equilibrium between L-OPA1 and S-OPA1 influences cristae shape and morphology: increased L-OPA1 levels promote cristae stacking and elongated mitochondria, while increased S-OPA1 levels correlated with irregular cristae packing and round mitochondria shape. Coexpression of isoform 1 with shorter alternative products is required for optimal activity in promoting mitochondrial fusion. In terms of biological role, isoforms that contain the alternative exon 4b are required for mitochondrial genome maintenance, possibly by anchoring the mitochondrial nucleoids to the inner mitochondrial membrane. This is Dynamin-like GTPase OPA1, mitochondrial from Homo sapiens (Human).